Here is a 228-residue protein sequence, read N- to C-terminus: MTHLLIVDDEQDIVDICQTYFEYEGYKVTTTTSGKEAISLLSNDIDIMVLDIMMPEVNGYDIVKEMKRQKLDIPFIYLTAKTQEHDTIYALTLGADDYVKKPFSPRELVLRINNLLTRMKKYHHQPVEQLSFDELTLINLSKVVTVNGHEVPMRIKEFELLWYLASRENEVISKSELLEKVWGYDYYEDANTVNVHIHRIREKLEKESFTTYTITTVWGLGYKFERSR.

The Response regulatory domain occupies 3 to 116; the sequence is HLLIVDDEQD…ELVLRINNLL (114 aa). D51 bears the 4-aspartylphosphate mark. The segment at residues 127 to 226 is a DNA-binding region (ompR/PhoB-type); it reads VEQLSFDELT…VWGLGYKFER (100 aa).

In terms of processing, phosphorylated by SaeS.

It is found in the cytoplasm. Its function is as follows. Member of the two-component regulatory system SaeR/SaeS involved in the regulation of staphylococcal virulence factors in a strain-dependent fashion. Probably functions as a transcriptional regulator via a specific DNA-binding domain, recognizing motifs near the promoter sequences of target genes. The polypeptide is Response regulator SaeR (saeR) (Staphylococcus aureus (strain USA300)).